A 340-amino-acid chain; its full sequence is MITIRDVARQAGVSVATVSRVLNNSALVSPDTRDAVMQAVTLLGYRPNANAQALATQVSDTIGVVVMDVSDAFFGALVKAVDLVAQQHQKYVLIGNSYHEAEKERHAIEVLIRQRCNALIVHSKALTDRELSDFMDQIPGMVLINRIVPGYAHRCVCLDNVSGARMATRMLLNNGHQRIGYLASSHRIEDDAMRREGWLHALQEQGIAASESWIGTGTPDMQGGESAMVELLGRNLQLTAVFAYNDNMAAGALTALKDNGIAIPLHLSVIGFDDIPIARYTDPQLTTVRYPIASMAKIATELALQGAAGTLDITATHCFMPTLVRRHSVAWRQNAVLITN.

The region spanning 1 to 56 is the HTH lacI-type domain; sequence MITIRDVARQAGVSVATVSRVLNNSALVSPDTRDAVMQAVTLLGYRPNANAQALAT. The H-T-H motif DNA-binding region spans 4–23; the sequence is IRDVARQAGVSVATVSRVLN.

As to quaternary structure, homodimer.

Repressor of the mgl operon. Binds galactose and D-fucose as inducers. GalS binds to an operator DNA sequence within its own coding sequence. The chain is HTH-type transcriptional regulator GalS (galS) from Salmonella typhimurium (strain LT2 / SGSC1412 / ATCC 700720).